The sequence spans 155 residues: Polyadenylate-binding protein-interacting protein 5 (155 aa).

A PAM2-like motif is present at residues 7–17 (ALNPHAASYVP). The CUE domain occupies 66 to 109 (DIDMDIEYLLVTFSGLSQESITDVYLANGGDLEATIEMLNQLEI). The tract at residues 114–155 (SEENLPETLDIGDISESGPSTSKSTEVAASTSSVIPNAPVSA) is disordered. Over residues 130–148 (SGPSTSKSTEVAASTSSVI) the composition is skewed to polar residues.

Specifically expressed in immature siliques.

In terms of biological role, promotes polyploidy in dark-grown seedlings. Regulates the endocycle leading to hypocotyl elongation. The chain is Polyadenylate-binding protein-interacting protein 5 (CID5) from Arabidopsis thaliana (Mouse-ear cress).